We begin with the raw amino-acid sequence, 367 residues long: Alanine racemase (367 aa).

K40 functions as the Proton acceptor; specific for D-alanine in the catalytic mechanism. The residue at position 40 (K40) is an N6-(pyridoxal phosphate)lysine. R136 provides a ligand contact to substrate. Y263 acts as the Proton acceptor; specific for L-alanine in catalysis. Position 310 (M310) interacts with substrate.

This sequence belongs to the alanine racemase family. Pyridoxal 5'-phosphate is required as a cofactor.

The enzyme catalyses L-alanine = D-alanine. Its pathway is amino-acid biosynthesis; D-alanine biosynthesis; D-alanine from L-alanine: step 1/1. Functionally, catalyzes the interconversion of L-alanine and D-alanine. May also act on other amino acids. This is Alanine racemase (alr) from Streptococcus pneumoniae (strain ATCC 700669 / Spain 23F-1).